We begin with the raw amino-acid sequence, 277 residues long: Probable CCR4-associated factor 1 homolog 10 (277 aa).

A divalent metal cation contacts are provided by aspartate 40, glutamate 42, aspartate 166, and aspartate 235.

Belongs to the CAF1 family. In terms of assembly, component of the CCR4-NOT complex, at least composed of CRR4 and CAF1 proteins. The cofactor is a divalent metal cation.

The protein localises to the nucleus. It localises to the cytoplasm. The catalysed reaction is Exonucleolytic cleavage of poly(A) to 5'-AMP.. Its function is as follows. Ubiquitous transcription factor required for a diverse set of processes. It is a component of the CCR4 complex involved in the control of gene expression. The protein is Probable CCR4-associated factor 1 homolog 10 (CAF1-10) of Arabidopsis thaliana (Mouse-ear cress).